The sequence spans 101 residues: Small ribosomal subunit protein uS14 (101 aa).

The disordered stretch occupies residues 1–24 (MAKVSSIKKNEKRKKLSQSLHNKR). Over residues 10 to 24 (NEKRKKLSQSLHNKR) the composition is skewed to basic residues.

This sequence belongs to the universal ribosomal protein uS14 family. Part of the 30S ribosomal subunit. Contacts proteins S3 and S10.

In terms of biological role, binds 16S rRNA, required for the assembly of 30S particles and may also be responsible for determining the conformation of the 16S rRNA at the A site. The protein is Small ribosomal subunit protein uS14 of Rickettsia bellii (strain OSU 85-389).